A 214-amino-acid chain; its full sequence is Putative pyrophosphatase PpaX (214 aa).

The active-site Nucleophile is aspartate 8.

It belongs to the HAD-like hydrolase superfamily. PpaX family. Requires Mg(2+) as cofactor.

It catalyses the reaction diphosphate + H2O = 2 phosphate + H(+). The sequence is that of Putative pyrophosphatase PpaX from Clostridium perfringens (strain 13 / Type A).